Reading from the N-terminus, the 262-residue chain is Tropinone reductase homolog At2g29310 (262 aa).

NADP(+) is bound at residue 13 to 37; that stretch reads LVTGAASGIGYAIVEELASFGAIIH. Ser-146 lines the substrate pocket. Tyr-159 (proton acceptor) is an active-site residue.

It belongs to the short-chain dehydrogenases/reductases (SDR) family. SDR65C subfamily.

The chain is Tropinone reductase homolog At2g29310 from Arabidopsis thaliana (Mouse-ear cress).